The sequence spans 565 residues: Sensor histidine kinase YpdA (565 aa).

The Cytoplasmic segment spans residues 1-3; sequence MHE. Residues 4-24 traverse the membrane as a helical segment; that stretch reads IFNMLLAVFDRAALMLICLFF. At 25 to 45 the chain is on the periplasmic side; it reads LIRIRLFRELLHKSAHSPKEL. A helical membrane pass occupies residues 46–66; the sequence is LAVTAIFSLFALFSTWSGVPV. At 67–74 the chain is on the cytoplasmic side; it reads EGSLVNVR. A helical transmembrane segment spans residues 75-95; it reads IIAVMSGGILFGPWVGIITGV. Residues 96 to 107 are Periplasmic-facing; the sequence is IAGIHRYLIDIG. The helical transmembrane segment at 108–128 threads the bilayer; it reads GVTAIPCFITSILAGCISGWI. Residues 129–139 lie on the Cytoplasmic side of the membrane; the sequence is NLKIPKAQRWR. The chain crosses the membrane as a helical span at residues 140-160; sequence VGILGGMLCETLTMILVIVWA. The Periplasmic portion of the chain corresponds to 161–172; that stretch reads PTTALGIDIVSK. The helical transmembrane segment at 173-193 threads the bilayer; the sequence is IGIPMILGSVCIGFIVLLVQS. Topologically, residues 194 to 565 are cytoplasmic; sequence VEGEKEASAA…PVASQATLLL (372 aa). One can recognise a GAF domain in the interval 223–342; that stretch reads VNSESLRKVC…AVGLSQIIST (120 aa). Positions 343–554 constitute a Histidine kinase domain; the sequence is QLEVSRAEQL…EIAFYIPNQR (212 aa). Residue His371 is modified to Phosphohistidine; by autocatalysis.

In terms of assembly, interacts with BtsT and YhjX. In terms of processing, autophosphorylated.

The protein resides in the cell inner membrane. The enzyme catalyses ATP + protein L-histidine = ADP + protein N-phospho-L-histidine.. Member of the two-component regulatory system YpdA/YpdB, which is part of a nutrient-sensing regulatory network composed of YpdA/YpdB, the high-affinity pyruvate signaling system BtsS/BtsR and their respective target proteins, YhjX and BtsT. YpdA activates YpdB by phosphorylation in response to high concentrations of extracellular pyruvate. Activation of the YpdA/YpdB signaling cascade also promotes BtsS/BtsR-mediated btsT expression. This is Sensor histidine kinase YpdA (ypdA) from Escherichia coli (strain K12).